Here is a 107-residue protein sequence, read N- to C-terminus: UPF0122 protein EAT1b_2891 (107 aa).

It belongs to the UPF0122 family.

Might take part in the signal recognition particle (SRP) pathway. This is inferred from the conservation of its genetic proximity to ftsY/ffh. May be a regulatory protein. The polypeptide is UPF0122 protein EAT1b_2891 (Exiguobacterium sp. (strain ATCC BAA-1283 / AT1b)).